The sequence spans 246 residues: Phosphomannomutase 2 (246 aa).

At Ala-2 the chain carries N-acetylalanine. Asp-12 (nucleophile) is an active-site residue. Residues Asp-12 and Asp-14 each contribute to the Mg(2+) site. The active-site Proton donor/acceptor is the Asp-14. Alpha-D-mannose 1-phosphate is bound by residues Arg-21, Arg-123, Arg-134, and Arg-141. Lys-149 carries the N6-acetyllysine modification. The alpha-D-mannose 1-phosphate site is built by Ser-179 and Asp-181. Mg(2+)-binding residues include Asp-209, Phe-221, Asp-223, and Thr-226.

This sequence belongs to the eukaryotic PMM family. In terms of assembly, homodimer.

The protein localises to the cytoplasm. The catalysed reaction is alpha-D-mannose 1-phosphate = D-mannose 6-phosphate. The protein operates within nucleotide-sugar biosynthesis; GDP-alpha-D-mannose biosynthesis; alpha-D-mannose 1-phosphate from D-fructose 6-phosphate: step 2/2. Involved in the synthesis of the GDP-mannose and dolichol-phosphate-mannose required for a number of critical mannosyl transfer reactions. This chain is Phosphomannomutase 2 (PMM2), found in Macaca fascicularis (Crab-eating macaque).